The chain runs to 212 residues: Peptide methionine sulfoxide reductase MsrA (212 aa).

Residue Cys52 is part of the active site.

It belongs to the MsrA Met sulfoxide reductase family.

The catalysed reaction is L-methionyl-[protein] + [thioredoxin]-disulfide + H2O = L-methionyl-(S)-S-oxide-[protein] + [thioredoxin]-dithiol. It catalyses the reaction [thioredoxin]-disulfide + L-methionine + H2O = L-methionine (S)-S-oxide + [thioredoxin]-dithiol. In terms of biological role, has an important function as a repair enzyme for proteins that have been inactivated by oxidation. Catalyzes the reversible oxidation-reduction of methionine sulfoxide in proteins to methionine. In Salmonella arizonae (strain ATCC BAA-731 / CDC346-86 / RSK2980), this protein is Peptide methionine sulfoxide reductase MsrA.